Reading from the N-terminus, the 402-residue chain is MKEKPAPKKIVLAYSGGLDTSVILAWLKDTYGCEVIAFCADVGQKEELTGLEEKGKNTGASKVYIQDLRLEFARDFIYPAIRGNAIYEMRYLLGTSLARPLIAKAMADVAKKEGADAFSHGATGKGNDQVRFELTFKALSPNLQIIAPWRTWDFGGRADLIEYAKKKGIPVPVTAAKPYSMDRNLMHLSFEGGILEDPYNEPKEDMFILTVSPEKAPDKPTYLELDFENGDCVAIDGKKMNPLEVMETLNDLGGKNGVGRVDIVENRLVGIKSRGVYETPGGTILHIAHRDLESITLDRDTQHKKDELSQEFARYIYNGQWYSNQMNALRAYMDYTQKYVNGTVRIKLYKGNCTVVGRKSNKSLYNAGLSTFEKEELYNQYDAEGFINLYGLPMKEWARVNQ.

Residues 13–21 (AYSGGLDTS) and alanine 40 contribute to the ATP site. L-citrulline is bound by residues tyrosine 91 and serine 96. An ATP-binding site is contributed by glycine 121. Residues threonine 123, asparagine 127, and aspartate 128 each contribute to the L-aspartate site. L-citrulline is bound at residue asparagine 127. The L-citrulline site is built by arginine 131, serine 180, serine 189, glutamate 265, and tyrosine 277.

The protein belongs to the argininosuccinate synthase family. Type 1 subfamily. Homotetramer.

The protein localises to the cytoplasm. The enzyme catalyses L-citrulline + L-aspartate + ATP = 2-(N(omega)-L-arginino)succinate + AMP + diphosphate + H(+). It functions in the pathway amino-acid biosynthesis; L-arginine biosynthesis; L-arginine from L-ornithine and carbamoyl phosphate: step 2/3. The polypeptide is Argininosuccinate synthase (Leptospira biflexa serovar Patoc (strain Patoc 1 / Ames)).